Consider the following 226-residue polypeptide: Transmembrane emp24 domain-containing protein 5 (226 aa).

The N-terminal stretch at Met-1 to Gly-24 is a signal peptide. Over Phe-25 to Asn-193 the chain is Lumenal. The GOLD domain maps to Lys-42 to Leu-123. A helical membrane pass occupies residues Phe-194–Leu-214. Over Lys-215 to Thr-226 the chain is Cytoplasmic. The short motif at Leu-217 to Phe-218 is the Mediates export from ER element.

Belongs to the EMP24/GP25L family. In terms of assembly, interacts with TMED9 and TMED10.

It localises to the endoplasmic reticulum membrane. Its subcellular location is the golgi apparatus. The protein resides in the cis-Golgi network membrane. The protein localises to the endoplasmic reticulum-Golgi intermediate compartment membrane. Its function is as follows. Potential role in vesicular protein trafficking, mainly in the early secretory pathway. Required for the maintenance of the Golgi apparatus; involved in protein exchange between Golgi stacks during assembly. Probably not required for COPI-vesicle-mediated retrograde transport. The polypeptide is Transmembrane emp24 domain-containing protein 5 (TMED5) (Bos taurus (Bovine)).